The chain runs to 127 residues: Small ribosomal subunit protein uS12 (127 aa).

Asp89 bears the 3-methylthioaspartic acid mark.

Belongs to the universal ribosomal protein uS12 family. Part of the 30S ribosomal subunit. Contacts proteins S8 and S17. May interact with IF1 in the 30S initiation complex.

With S4 and S5 plays an important role in translational accuracy. Functionally, interacts with and stabilizes bases of the 16S rRNA that are involved in tRNA selection in the A site and with the mRNA backbone. Located at the interface of the 30S and 50S subunits, it traverses the body of the 30S subunit contacting proteins on the other side and probably holding the rRNA structure together. The combined cluster of proteins S8, S12 and S17 appears to hold together the shoulder and platform of the 30S subunit. This is Small ribosomal subunit protein uS12 from Campylobacter fetus subsp. fetus (strain 82-40).